The primary structure comprises 778 residues: Protection of telomeres protein 1 (778 aa).

Belongs to the telombin family. In terms of assembly, homodimer or homooligomer. Component of the telomerase ribonucleoprotein complex. Binds single-stranded telomeric DNA as a monomer. Found in a complex with TERF1, TINF2 and TNKS1. Interacts with TNKS1.

Its subcellular location is the nucleus. The protein resides in the chromosome. The protein localises to the telomere. Component of the telomerase ribonucleoprotein (RNP) complex that is essential for the replication of chromosome termini. Is a component of the double-stranded telomeric DNA-binding TRF1 complex that is involved in the regulation of telomere length by cis-inhibition of telomerase. Also acts as a single-stranded telomeric DNA-binding protein and thus may act as a downstream effector of the TRF1 complex and may transduce information about telomere maintenance and/or length to the telomere terminus. Binds to at least two telomeric single-stranded 5'-TTAGGG-3' repeats (G-strand). Its activity is TERT dependent but it does not increase TERT activity. The sequence is that of Protection of telomeres protein 1 (POT1) from Gallus gallus (Chicken).